A 1252-amino-acid polypeptide reads, in one-letter code: Immunoglobulin superfamily DCC subclass member 4 (1252 aa).

Residues Met-1–Gly-22 form the signal peptide. Topologically, residues Glu-23 to Thr-956 are extracellular. Ig-like domains lie at Pro-27 to Val-136, Glu-142 to Thr-228, Gln-241 to Arg-329, and Pro-334 to Ala-420. 2 cysteine pairs are disulfide-bonded: Cys-55/Cys-120 and Cys-163/Cys-211. Asn-88 carries an N-linked (GlcNAc...) asparagine glycan. A glycan (N-linked (GlcNAc...) asparagine) is linked at Asn-251. 2 disulfide bridges follow: Cys-264–Cys-311 and Cys-355–Cys-404. Fibronectin type-III domains are found at residues Ala-430–Asp-524, Pro-526–Val-622, Ala-631–Leu-742, Pro-751–Asp-844, and Pro-849–Lys-944. The tract at residues Thr-669–Asp-688 is disordered. Residues Gly-957 to Leu-977 form a helical membrane-spanning segment. Topologically, residues Arg-978–Pro-1252 are cytoplasmic. Phosphothreonine is present on Thr-994.

It belongs to the immunoglobulin superfamily. DCC family. As to expression, expressed in skeletal muscle, heart and brain. Brain expression is hippocampus-specific.

Its subcellular location is the cell membrane. This Mus musculus (Mouse) protein is Immunoglobulin superfamily DCC subclass member 4 (Igdcc4).